The primary structure comprises 389 residues: Putative phosphoserine aminotransferase (389 aa).

R45 provides a ligand contact to L-glutamate. Residues 79-80 (GT), W114, T169, D191, and Q214 each bind pyridoxal 5'-phosphate. K215 is subject to N6-(pyridoxal phosphate)lysine. 265–266 (NT) is a binding site for pyridoxal 5'-phosphate.

This sequence belongs to the class-V pyridoxal-phosphate-dependent aminotransferase family. SerC subfamily. In terms of assembly, homodimer. It depends on pyridoxal 5'-phosphate as a cofactor.

The catalysed reaction is O-phospho-L-serine + 2-oxoglutarate = 3-phosphooxypyruvate + L-glutamate. It catalyses the reaction 4-(phosphooxy)-L-threonine + 2-oxoglutarate = (R)-3-hydroxy-2-oxo-4-phosphooxybutanoate + L-glutamate. The protein operates within amino-acid biosynthesis; L-serine biosynthesis; L-serine from 3-phospho-D-glycerate: step 2/3. Its pathway is cofactor biosynthesis; pyridoxine 5'-phosphate biosynthesis; pyridoxine 5'-phosphate from D-erythrose 4-phosphate: step 3/5. Catalyzes the reversible conversion of 3-phosphohydroxypyruvate to phosphoserine and of 3-hydroxy-2-oxo-4-phosphonooxybutanoate to phosphohydroxythreonine. The protein is Putative phosphoserine aminotransferase of Schizosaccharomyces pombe (strain 972 / ATCC 24843) (Fission yeast).